The chain runs to 513 residues: MSTNPKPQRKTKRNTNRRPQDVKFPGGGQIVGGVYLLPRRGPRLGVRATRKTSERSQPRGRRQPIPKARRPEGRAWAQPGYPWPLYGNEGLGWAGWLLSPRGSRPSWGPTDPRRRSRNLGKVIDTLTCGFADLMGYIPLVGAPLGGAARALAHGVRVLEDSVNYATGNLPGCSFSIFLLALLSCLTIPASAYEVRNVSGVYHVTNDCSNSSIVYEAADLIMHAPGCVPCVRENNSSRCWVALTPTLAARNTSIPTTTIRRHVDLLVGAATFCSAMYVGDLCGSVFLVSQLFTFSPRRHETLQDCNCSIYPGHLSGHRMAWDMMMNWSPTTALVVSQLLRIPQTVVDMVTGAHWGVLAGLAYYSMVGNWAKVLIVMLLFAGVDGTTHVTGGATGHTTSGIASLFLPGASQKIQLINTNGSWHINRTALNCNDSLNTGFLAALFYTHKFNASGCPERLASCRSIDGFDQGWGPITYTEPGDSDQKPYCWHYAPQRCSVVSAADVCGPVYCFTPSP.

S2 is subject to N-acetylserine; by host. An interaction with STAT1 region spans residues 2 to 23 (STNPKPQRKTKRNTNRRPQDVK). The segment at 2–58 (STNPKPQRKTKRNTNRRPQDVKFPGGGQIVGGVYLLPRRGPRLGVRATRKTSERSQP) is interaction with EIF2AK2/PKR. The segment at 2–59 (STNPKPQRKTKRNTNRRPQDVKFPGGGQIVGGVYLLPRRGPRLGVRATRKTSERSQPR) is interaction with DDX3X. Positions 2–75 (STNPKPQRKT…PKARRPEGRA (74 aa)) are disordered. The Cytoplasmic portion of the chain corresponds to 2-168 (STNPKPQRKT…EDSVNYATGN (167 aa)). 2 short sequence motifs (nuclear localization signal) span residues 5–13 (PKPQRKTKR) and 38–43 (PRRGPR). Positions 7–16 (PQRKTKRNTN) are enriched in basic residues. A compositionally biased stretch (low complexity) spans 32-47 (GGVYLLPRRGPRLGVR). S53 carries the phosphoserine; by host modification. Short sequence motifs (nuclear localization signal) lie at residues 58-64 (PRGRRQP) and 66-71 (PKARRP). The span at 58-68 (PRGRRQPIPKA) shows a compositional bias: basic residues. S99 carries the post-translational modification Phosphoserine; by host. The segment at 112–152 (PRRRSRNLGKVIDTLTCGFADLMGYIPLVGAPLGGAARALA) is important for endoplasmic reticulum and mitochondrial localization. Phosphoserine; by host PKA is present on S116. The interaction with APOA2 stretch occupies residues 122-173 (VIDTLTCGFADLMGYIPLVGAPLGGAARALAHGVRVLEDSVNYATGNLPGCS). Positions 164–167 (YATG) are important for lipid droplets localization. Residues 169-189 (LPGCSFSIFLLALLSCLTIPA) traverse the membrane as a helical segment. A propeptide spans 178–191 (LLALLSCLTIPASA) (ER anchor for the core protein, removed in mature form by host signal peptidase). Topologically, residues 190-358 (SAYEVRNVSG…TGAHWGVLAG (169 aa)) are lumenal. 4 N-linked (GlcNAc...) asparagine; by host glycosylation sites follow: N196, N209, N234, and N250. The segment at 265–296 (LVGAATFCSAMYVGDLCGSVFLVSQLFTFSPR) is important for fusion. N-linked (GlcNAc...) asparagine; by host glycosylation is present at N305. A helical transmembrane segment spans residues 359 to 379 (LAYYSMVGNWAKVLIVMLLFA). At 380–513 (GVDGTTHVTG…GPVYCFTPSP (134 aa)) the chain is on the lumenal side. The interval 385-411 (THVTGGATGHTTSGIASLFLPGASQKI) is HVR1. N-linked (GlcNAc...) (high mannose) asparagine; by host glycosylation is found at N417, N423, N430, and N448. The HVR2 stretch occupies residues 474–479 (YTEPGD). The tract at residues 480-493 (SDQKPYCWHYAPQR) is CD81-binding 1.

It belongs to the hepacivirus polyprotein family. Homooligomer. Interacts with E1 (via C-terminus). Interacts with the non-structural protein 5A. Interacts (via N-terminus) with host STAT1 (via SH2 domain); this interaction results in decreased STAT1 phosphorylation and ubiquitin-mediated proteasome-dependent STAT1 degradation, leading to decreased IFN-stimulated gene transcription. Interacts with host STAT3; this interaction constitutively activates STAT3. Interacts with host LTBR receptor. Interacts with host TNFRSF1A receptor and possibly induces apoptosis. Interacts with host HNRPK. Interacts with host YWHAE. Interacts with host UBE3A/E6AP. Interacts with host DDX3X. Interacts with host APOA2. Interacts with host RXRA protein. Interacts with host SP110 isoform 3/Sp110b; this interaction sequesters the transcriptional corepressor SP110 away from the nucleus. Interacts with host CREB3 nuclear transcription protein; this interaction triggers cell transformation. Interacts with host ACY3. Interacts with host C1QR1. Interacts with host RBM24; this interaction, which enhances the interaction of the mature core protein with 5'-UTR, may inhibit viral translation and favor replication. Interacts with host EIF2AK2/PKR; this interaction induces the autophosphorylation of EIF2AK2. Part of the viral assembly initiation complex composed of NS2, E1, E2, NS3, NS4A, NS5A and the mature core protein. In terms of assembly, forms a heterodimer with envelope glycoprotein E2. Interacts with mature core protein. Interacts with protease NS2. The heterodimer E1/E2 interacts with host CLDN1; this interaction plays a role in viral entry into host cell. Interacts with host SPSB2 (via C-terminus). Part of the viral assembly initiation complex composed of NS2, E1, E2, NS3, NS4A, NS5A and the mature core protein. As to quaternary structure, forms a heterodimer with envelope glycoprotein E1. Interacts with host CD81 and SCARB1 receptors; these interactions play a role in viral entry into host cell. Interacts with host EIF2AK2/PKR; this interaction inhibits EIF2AK2 and probably allows the virus to evade the innate immune response. Interacts with host CD209/DC-SIGN and CLEC4M/DC-SIGNR. Interact with host SPCS1; this interaction is essential for viral particle assembly. Interacts with protease NS2. The heterodimer E1/E2 interacts with host CLDN1; this interaction plays a role in viral entry into host cell. Part of the viral assembly initiation complex composed of NS2, E1, E2, NS3, NS4A, NS5A and the mature core protein. Specific enzymatic cleavages in vivo yield mature proteins. The structural proteins, core, E1, E2 and p7 are produced by proteolytic processing by host signal peptidases. The core protein precursor is synthesized as a 23 kDa, which is retained in the ER membrane through the hydrophobic signal peptide. Cleavage by the signal peptidase releases the 21 kDa mature core protein. The cleavage of the core protein precursor occurs between aminoacids 176 and 188 but the exact cleavage site is not known. Some degraded forms of the core protein appear as well during the course of infection. The other proteins (p7, NS2, NS3, NS4A, NS4B, NS5A and NS5B) are cleaved by the viral proteases. Autoprocessing between NS2 and NS3 is mediated by the NS2 cysteine protease catalytic domain and regulated by the NS3 N-terminal domain. In terms of processing, phosphorylated by host PKC and PKA. Post-translationally, ubiquitinated; mediated by UBE3A and leading to core protein subsequent proteasomal degradation. Highly N-glycosylated.

The protein resides in the host endoplasmic reticulum membrane. It is found in the host mitochondrion membrane. The protein localises to the virion. It localises to the host cytoplasm. Its subcellular location is the host nucleus. The protein resides in the host lipid droplet. It is found in the virion membrane. Its function is as follows. Packages viral RNA to form a viral nucleocapsid, and promotes virion budding. Participates in the viral particle production as a result of its interaction with the non-structural protein 5A. Binds RNA and may function as a RNA chaperone to induce the RNA structural rearrangements taking place during virus replication. Modulates viral translation initiation by interacting with viral IRES and 40S ribosomal subunit. Affects various cell signaling pathways, host immunity and lipid metabolism. Prevents the establishment of cellular antiviral state by blocking the interferon-alpha/beta (IFN-alpha/beta) and IFN-gamma signaling pathways and by blocking the formation of phosphorylated STAT1 and promoting ubiquitin-mediated proteasome-dependent degradation of STAT1. Activates STAT3 leading to cellular transformation. Regulates the activity of cellular genes, including c-myc and c-fos. May repress the promoter of p53, and sequester CREB3 and SP110 isoform 3/Sp110b in the cytoplasm. Represses cell cycle negative regulating factor CDKN1A, thereby interrupting an important check point of normal cell cycle regulation. Targets transcription factors involved in the regulation of inflammatory responses and in the immune response: suppresses TNF-induced NF-kappa-B activation, and activates AP-1. Binds to dendritic cells (DCs) via C1QR1, resulting in down-regulation of T-lymphocytes proliferation. Alters lipid metabolism by interacting with hepatocellular proteins involved in lipid accumulation and storage. Induces up-regulation of FAS promoter activity, and thereby contributes to the increased triglyceride accumulation in hepatocytes (steatosis). Functionally, forms a heterodimer with envelope glycoprotein E2, which mediates virus attachment to the host cell, virion internalization through clathrin-dependent endocytosis and fusion with host membrane. Fusion with the host cell is most likely mediated by both E1 and E2, through conformational rearrangements of the heterodimer required for fusion rather than a classical class II fusion mechanism. E1/E2 heterodimer binds host apolipoproteins such as APOB and ApoE thereby forming a lipo-viro-particle (LVP). APOE associated to the LVP allows the initial virus attachment to cell surface receptors such as the heparan sulfate proteoglycans (HSPGs), syndecan-1 (SDC1), syndecan-1 (SDC2), the low-density lipoprotein receptor (LDLR) and scavenger receptor class B type I (SCARB1). The cholesterol transfer activity of SCARB1 allows E2 exposure and binding of E2 to SCARB1 and the tetraspanin CD81. E1/E2 heterodimer binding on CD81 activates the epithelial growth factor receptor (EGFR) signaling pathway. Diffusion of the complex E1-E2-EGFR-SCARB1-CD81 to the cell lateral membrane allows further interaction with Claudin 1 (CLDN1) and occludin (OCLN) to finally trigger HCV entry. In terms of biological role, forms a heterodimer with envelope glycoprotein E1, which mediates virus attachment to the host cell, virion internalization through clathrin-dependent endocytosis and fusion with host membrane. Fusion with the host cell is most likely mediated by both E1 and E2, through conformational rearrangements of the heterodimer required for fusion rather than a classical class II fusion mechanism. The interaction between envelope glycoprotein E2 and host apolipoprotein E/APOE allows the proper assembly, maturation and infectivity of the viral particles. This interaction is probably promoted via the up-regulation of cellular autophagy by the virus. E1/E2 heterodimer binds host apolipoproteins such as APOB and APOE thereby forming a lipo-viro-particle (LVP). APOE associated to the LVP allows the initial virus attachment to cell surface receptors such as the heparan sulfate proteoglycans (HSPGs), syndecan-1 (SDC1), syndecan-1 (SDC2), the low-density lipoprotein receptor (LDLR) and scavenger receptor class B type I (SCARB1). The cholesterol transfer activity of SCARB1 allows E2 exposure and binding of E2 to SCARB1 and the tetraspanin CD81. E1/E2 heterodimer binding on CD81 activates the epithelial growth factor receptor (EGFR) signaling pathway. Diffusion of the complex E1-E2-EGFR-SCARB1-CD81 to the cell lateral membrane allows further interaction with Claudin 1 (CLDN1) and occludin (OCLN) to finally trigger HCV entry. Inhibits host EIF2AK2/PKR activation, preventing the establishment of an antiviral state. Viral ligand for CD209/DC-SIGN and CLEC4M/DC-SIGNR, which are respectively found on dendritic cells (DCs), and on liver sinusoidal endothelial cells and macrophage-like cells of lymph node sinuses. These interactions allow the capture of circulating HCV particles by these cells and subsequent facilitated transmission to permissive cells such as hepatocytes and lymphocyte subpopulations. This is Genome polyprotein from Homo sapiens (Human).